Reading from the N-terminus, the 198-residue chain is GTP cyclohydrolase-2 (198 aa).

52-56 (RMHSE) contributes to the GTP binding site. 3 residues coordinate Zn(2+): C57, C68, and C70. GTP-binding positions include Q73, 94–96 (EGR), and T116. Catalysis depends on D128, which acts as the Proton acceptor. Catalysis depends on R130, which acts as the Nucleophile. GTP contacts are provided by T151 and K156.

It belongs to the GTP cyclohydrolase II family. Zn(2+) serves as cofactor.

The enzyme catalyses GTP + 4 H2O = 2,5-diamino-6-hydroxy-4-(5-phosphoribosylamino)-pyrimidine + formate + 2 phosphate + 3 H(+). The protein operates within cofactor biosynthesis; riboflavin biosynthesis; 5-amino-6-(D-ribitylamino)uracil from GTP: step 1/4. Catalyzes the conversion of GTP to 2,5-diamino-6-ribosylamino-4(3H)-pyrimidinone 5'-phosphate (DARP), formate and pyrophosphate. The polypeptide is GTP cyclohydrolase-2 (Vibrio cholerae serotype O1 (strain ATCC 39315 / El Tor Inaba N16961)).